Consider the following 614-residue polypeptide: 2-succinyl-5-enolpyruvyl-6-hydroxy-3-cyclohexene-1-carboxylate synthase (614 aa).

It belongs to the TPP enzyme family. MenD subfamily. As to quaternary structure, homodimer. Mg(2+) is required as a cofactor. The cofactor is Mn(2+). Requires thiamine diphosphate as cofactor.

It catalyses the reaction isochorismate + 2-oxoglutarate + H(+) = 5-enolpyruvoyl-6-hydroxy-2-succinyl-cyclohex-3-ene-1-carboxylate + CO2. It participates in quinol/quinone metabolism; 1,4-dihydroxy-2-naphthoate biosynthesis; 1,4-dihydroxy-2-naphthoate from chorismate: step 2/7. Its pathway is quinol/quinone metabolism; menaquinone biosynthesis. In terms of biological role, catalyzes the thiamine diphosphate-dependent decarboxylation of 2-oxoglutarate and the subsequent addition of the resulting succinic semialdehyde-thiamine pyrophosphate anion to isochorismate to yield 2-succinyl-5-enolpyruvyl-6-hydroxy-3-cyclohexene-1-carboxylate (SEPHCHC). In Sorangium cellulosum (strain So ce56) (Polyangium cellulosum (strain So ce56)), this protein is 2-succinyl-5-enolpyruvyl-6-hydroxy-3-cyclohexene-1-carboxylate synthase.